We begin with the raw amino-acid sequence, 1154 residues long: Polyketide biosynthesis protein ThaF (1154 aa).

An acyl transferase region spans residues 330-714; the sequence is MHAFLFPGQG…TNGIAPAARV (385 aa). Residues 627–689 form a disordered region; sequence SAVAASAPPR…PAPAPAPAPA (63 aa). The segment covering 641-672 has biased composition (low complexity); the sequence is ADAQPPAASPARAATAASTMPPASASASASAP. Positions 673 to 689 are enriched in pro residues; it reads APAPAPAPAPAPAPAPA.

It in the N-terminal section; belongs to the FabD family.

It localises to the cytoplasm. The enzyme catalyses holo-[ACP] + malonyl-CoA = malonyl-[ACP] + CoA. It participates in antibiotic biosynthesis. Functionally, involved in production of the polyketide antibiotic thailandamide. Probably has an acyl transferase activity and could also have a flavin mononucleotide-dependent oxidoreductase activity. In Burkholderia thailandensis (strain ATCC 700388 / DSM 13276 / CCUG 48851 / CIP 106301 / E264), this protein is Polyketide biosynthesis protein ThaF.